A 610-amino-acid chain; its full sequence is UvrABC system protein C (610 aa).

Positions 16–94 constitute a GIY-YIG domain; it reads HQPGVYRMYN…IKQYLPKYNV (79 aa). The region spanning 204-239 is the UVR domain; sequence NQVLELLVQKMEIASQQLKFEDAAKFRDQIQAIRRV.

The protein belongs to the UvrC family. In terms of assembly, interacts with UvrB in an incision complex.

The protein resides in the cytoplasm. In terms of biological role, the UvrABC repair system catalyzes the recognition and processing of DNA lesions. UvrC both incises the 5' and 3' sides of the lesion. The N-terminal half is responsible for the 3' incision and the C-terminal half is responsible for the 5' incision. In Vibrio vulnificus (strain CMCP6), this protein is UvrABC system protein C.